The following is a 712-amino-acid chain: Polyribonucleotide nucleotidyltransferase (712 aa).

Residues D487 and D493 each coordinate Mg(2+). The KH domain maps to 554-613 (PKIITMTINPDKIRDVIGPSGKQINKIIEETGVKIDIEQDGTVFISSINQEMNDKAKKII). One can recognise an S1 motif domain in the interval 623–691 (GEIYEGKVKR…KQGRVNLSRK (69 aa)).

It belongs to the polyribonucleotide nucleotidyltransferase family. The cofactor is Mg(2+).

It is found in the cytoplasm. The enzyme catalyses RNA(n+1) + phosphate = RNA(n) + a ribonucleoside 5'-diphosphate. Functionally, involved in mRNA degradation. Catalyzes the phosphorolysis of single-stranded polyribonucleotides processively in the 3'- to 5'-direction. The sequence is that of Polyribonucleotide nucleotidyltransferase from Bacillus cereus (strain AH187).